The chain runs to 209 residues: Ribosomal RNA small subunit methyltransferase G (209 aa).

S-adenosyl-L-methionine is bound by residues glycine 72, leucine 77, 123–124 (AE), and arginine 138.

Belongs to the methyltransferase superfamily. RNA methyltransferase RsmG family.

The protein resides in the cytoplasm. Its function is as follows. Specifically methylates the N7 position of guanine in position 518 of 16S rRNA. The polypeptide is Ribosomal RNA small subunit methyltransferase G (Leifsonia xyli subsp. xyli (strain CTCB07)).